Consider the following 416-residue polypeptide: Serine hydroxymethyltransferase (416 aa).

(6S)-5,6,7,8-tetrahydrofolate is bound by residues Leu118 and Gly122 to Leu124. Lys226 bears the N6-(pyridoxal phosphate)lysine mark. (6S)-5,6,7,8-tetrahydrofolate contacts are provided by residues Glu242 and Ser350–Phe352.

The protein belongs to the SHMT family. Homodimer. It depends on pyridoxal 5'-phosphate as a cofactor.

The protein localises to the cytoplasm. It catalyses the reaction (6R)-5,10-methylene-5,6,7,8-tetrahydrofolate + glycine + H2O = (6S)-5,6,7,8-tetrahydrofolate + L-serine. The protein operates within one-carbon metabolism; tetrahydrofolate interconversion. Its pathway is amino-acid biosynthesis; glycine biosynthesis; glycine from L-serine: step 1/1. In terms of biological role, catalyzes the reversible interconversion of serine and glycine with tetrahydrofolate (THF) serving as the one-carbon carrier. This reaction serves as the major source of one-carbon groups required for the biosynthesis of purines, thymidylate, methionine, and other important biomolecules. Also exhibits THF-independent aldolase activity toward beta-hydroxyamino acids, producing glycine and aldehydes, via a retro-aldol mechanism. The protein is Serine hydroxymethyltransferase of Helicobacter hepaticus (strain ATCC 51449 / 3B1).